The sequence spans 591 residues: L-fucose isomerase (591 aa).

Catalysis depends on proton acceptor residues glutamate 337 and aspartate 361. Residues glutamate 337, aspartate 361, and histidine 528 each contribute to the Mn(2+) site.

This sequence belongs to the L-fucose isomerase family. Homohexamer. It depends on Mn(2+) as a cofactor.

It localises to the cytoplasm. It catalyses the reaction L-fucose = L-fuculose. It functions in the pathway carbohydrate degradation; L-fucose degradation; L-lactaldehyde and glycerone phosphate from L-fucose: step 1/3. In terms of biological role, converts the aldose L-fucose into the corresponding ketose L-fuculose. The protein is L-fucose isomerase of Escherichia coli (strain SMS-3-5 / SECEC).